We begin with the raw amino-acid sequence, 261 residues long: Claudin-18 (261 aa).

Topologically, residues 1-6 are cytoplasmic; sequence MSTTTC. The chain crosses the membrane as a helical span at residues 7–27; it reads QVVAFLLSILGLAGCIAATGM. Residues 28 to 80 are Extracellular-facing; it reads DMWSTQDLYDNPVTSVFQYEGLWRSCVRQSSGFTECRPYFTILGLPAMLQAVR. Residues 81-101 traverse the membrane as a helical segment; sequence ALMIVGIVLGAIGLLVSIFAL. At 102–122 the chain is on the cytoplasmic side; sequence KCIRIGSMEDSAKANMTLTSG. Residues 123–143 traverse the membrane as a helical segment; the sequence is IMFIVSGLCAIAGVSVFANML. Residues 144–174 are Extracellular-facing; that stretch reads VTNFWMSTANMYTGMGGMVQTVQTRYTFGAA. A helical transmembrane segment spans residues 175–195; it reads LFVGWVAGGLTLIGGVMMCIA. The required for role in regulation of RANKL-induced osteoclast differentiation stretch occupies residues 195–261; it reads ACRGLAPEET…QSYPSKHDYV (67 aa). Topologically, residues 196–261 are cytoplasmic; that stretch reads CRGLAPEETN…QSYPSKHDYV (66 aa). Residue S214 is modified to Phosphoserine. The tract at residues 242–261 is disordered; sequence DGGARTEDEVQSYPSKHDYV.

It belongs to the claudin family. Interacts with TJP2/ZO-2. Interacts with TJP1/ZO-1. Interacts with YAP1 (phosphorylated); the interaction sequesters YAP1 away from the nucleus and thereby restricts transcription of YAP1 target genes. In terms of assembly, interacts with CLDN19. As to expression, expression is restricted to the lung. Expression is restricted to the stomach mucosa where it is predominantly observed in the epithelial cells of the pit region and the base of the gastric glands including exocrine and endocrine cells (at protein level).

It localises to the cell junction. Its subcellular location is the tight junction. The protein resides in the cell membrane. It is found in the lateral cell membrane. Involved in alveolar fluid homeostasis via regulation of alveolar epithelial tight junction composition and therefore ion transport and solute permeability, potentially via downstream regulation of the actin cytoskeleton organization and beta-2-adrenergic signaling. Required for lung alveolarization and maintenance of the paracellular alveolar epithelial barrier. Acts to maintain epithelial progenitor cell proliferation and organ size, via regulation of YAP1 localization away from the nucleus and thereby restriction of YAP1 target gene transcription. Acts as a negative regulator of RANKL-induced osteoclast differentiation, potentially via relocation of TJP2/ZO-2 away from the nucleus, subsequently involved in bone resorption in response to calcium deficiency. Mediates the osteoprotective effects of estrogen, potentially via acting downstream of estrogen signaling independently of RANKL signaling pathways. In terms of biological role, involved in the maintenance of homeostasis of the alveolar microenvironment via regulation of pH and subsequent T-cell activation in the alveolar space, is therefore indirectly involved in limiting C.neoformans infection. Its function is as follows. Required for the formation of the gastric paracellular barrier via its role in tight junction formation, thereby involved in the response to gastric acidification. The sequence is that of Claudin-18 (CLDN18) from Homo sapiens (Human).